A 459-amino-acid polypeptide reads, in one-letter code: Cysteine--tRNA ligase (459 aa).

Zn(2+) is bound at residue cysteine 28. The 'HIGH' region signature appears at 30 to 40; the sequence is MTVYDFCHLGH. Zn(2+) contacts are provided by cysteine 209, histidine 234, and glutamate 238. Positions 266-270 match the 'KMSKS' region motif; that stretch reads KMAKS. ATP is bound at residue lysine 269. The interval 440 to 459 is disordered; that stretch reads QARGIELEDTPEGTKWRRTR.

Belongs to the class-I aminoacyl-tRNA synthetase family. Monomer. It depends on Zn(2+) as a cofactor.

The protein resides in the cytoplasm. It catalyses the reaction tRNA(Cys) + L-cysteine + ATP = L-cysteinyl-tRNA(Cys) + AMP + diphosphate. This Halorhodospira halophila (strain DSM 244 / SL1) (Ectothiorhodospira halophila (strain DSM 244 / SL1)) protein is Cysteine--tRNA ligase.